The following is a 464-amino-acid chain: Leucine-rich repeat-containing protein 34 (464 aa).

The tract at residues 1–48 (MAAQPPRPVGERSMGSSREAARAPARSPAWASTQASTPGAALAVQRES) is disordered. Residues 16-32 (SSREAARAPARSPAWAS) are compositionally biased toward low complexity. LRR repeat units follow at residues 295-315 (SLRY…VYLA) and 323-345 (TLEV…LSET).

In terms of assembly, interacts with NPM1 and NCL.

It is found in the nucleus. Its subcellular location is the nucleolus. The protein localises to the cytoplasm. Highly expressed in stem cells where it may be involved in regulation of pluripotency. In embryonic stem cells (ESCs), important for normal expression of the pluripotency regulators POU5F1/OCT4 and KLF4. Also important for expression of the ectodermal marker gene NES and the endodermal marker gene GATA4. Promotes stem cell proliferation in vitro. This Homo sapiens (Human) protein is Leucine-rich repeat-containing protein 34 (LRRC34).